The following is a 547-amino-acid chain: Chaperonin GroEL (547 aa).

ATP-binding positions include 30-33 (TLGP), lysine 51, 87-91 (DGTTT), glycine 415, and aspartate 495. A disordered region spans residues 526–547 (QDATPTASPDMGGMGGMGGGMM). Gly residues predominate over residues 537-547 (GGMGGMGGGMM).

The protein belongs to the chaperonin (HSP60) family. Forms a cylinder of 14 subunits composed of two heptameric rings stacked back-to-back. Interacts with the co-chaperonin GroES.

It is found in the cytoplasm. It catalyses the reaction ATP + H2O + a folded polypeptide = ADP + phosphate + an unfolded polypeptide.. Functionally, together with its co-chaperonin GroES, plays an essential role in assisting protein folding. The GroEL-GroES system forms a nano-cage that allows encapsulation of the non-native substrate proteins and provides a physical environment optimized to promote and accelerate protein folding. This is Chaperonin GroEL from Vesicomyosocius okutanii subsp. Calyptogena okutanii (strain HA).